Consider the following 1035-residue polypeptide: Tyrosine-protein kinase-like otk (1035 aa).

The first 23 residues, 1-23, serve as a signal peptide directing secretion; that stretch reads MDMDVMMISMCILASTLMAPGWA. Ig-like C2-type domains lie at 24–109, 110–199, 251–365, 368–464, and 469–559; these read STSG…REAS, PPAK…RVMS, PEDL…APLN, PGLL…VSIN, and PKFS…VQLV. At 24–582 the chain is on the extracellular side; it reads STSGFLRVPQ…GGDGFLVTRA (559 aa). 5 disulfide bridges follow: C47–C96, C138–C188, C276–C354, C399–C448, and C491–C543. N336, N418, N430, N445, N513, and N525 each carry an N-linked (GlcNAc...) asparagine glycan. Residues 583–603 traverse the membrane as a helical segment; it reads VLITMTVALAYIVLVVGLMLW. Over 604–1035 the chain is Cytoplasmic; the sequence is CRYRRQARKA…SKAMQSVAEK (432 aa). Disordered stretches follow at residues 623-683 and 721-775; these read AGGD…KSVY and AQSD…KEEE. Residues 658 to 676 are compositionally biased toward polar residues; it reads KSNGDAQKSDDTACSQQSR. Position 681 is a phosphoserine (S681). The 337-residue stretch at 693–1029 folds into the Protein kinase; inactive domain; that stretch reads LSELLQIGRG…QLGSALSKAM (337 aa). Residues 723–734 are compositionally biased toward basic and acidic residues; sequence SDKDADTEKQHS. The span at 766–775 shows a compositional bias: acidic residues; sequence DDIEEIKEEE.

The protein belongs to the protein kinase superfamily. Tyr protein kinase family. Insulin receptor subfamily. Interacts with plexA; component of a receptor complex that mediates the repulsive signaling in response to Semaphorin ligands.

It localises to the cell membrane. Acts as a calcium-dependent, homophilic cell adhesion molecule that regulates neural recognition during the development of the nervous system. Component of the repulsive Plexin signaling response to regulate motor axon guidance at the embryonic stage. Also component of a receptor complex that is required in the adult visual system to innervate the lamina layer; specific targeting of R1-R6 axons. This Drosophila persimilis (Fruit fly) protein is Tyrosine-protein kinase-like otk.